The following is an 899-amino-acid chain: Translation initiation factor IF-2 (899 aa).

Disordered stretches follow at residues 31–227 and 240–310; these read KKAE…ATEQ and VTTS…GFDK. Polar residues-rich tracts occupy residues 36-47 and 73-87; these read NVSQTEKQSLLS and STLS…SKSV. 3 stretches are compositionally biased toward basic and acidic residues: residues 101 to 173, 181 to 219, and 247 to 261; these read SALE…EKAK, AKSE…ETNE, and RAAE…ETTG. Over residues 296–308 the composition is skewed to polar residues; it reads PQVNAPTSMQQGF. A tr-type G domain is found at 398 to 565; it reads SRAPVVTIMG…AILLQSEILE (168 aa). The interval 407-414 is G1; sequence GHVDHGKT. Position 407 to 414 (407 to 414) interacts with GTP; sequence GHVDHGKT. The segment at 432 to 436 is G2; sequence GITQH. The interval 453–456 is G3; it reads DTPG. Residues 453 to 457 and 507 to 510 contribute to the GTP site; these read DTPGH and NKID. Residues 507-510 are G4; the sequence is NKID. The tract at residues 543–545 is G5; sequence SAK.

Belongs to the TRAFAC class translation factor GTPase superfamily. Classic translation factor GTPase family. IF-2 subfamily.

It localises to the cytoplasm. In terms of biological role, one of the essential components for the initiation of protein synthesis. Protects formylmethionyl-tRNA from spontaneous hydrolysis and promotes its binding to the 30S ribosomal subunits. Also involved in the hydrolysis of GTP during the formation of the 70S ribosomal complex. The polypeptide is Translation initiation factor IF-2 (Photobacterium profundum (strain SS9)).